The sequence spans 308 residues: Maspardin (308 aa).

Residues 87–159 (FCDGFRKLLD…NSFWLMPAFM (73 aa)) form the AB hydrolase-1 domain. Phosphoserine is present on S304.

This sequence belongs to the AB hydrolase superfamily. As to quaternary structure, interacts with CD4. Interacts with ALDH16A1. Expressed in all tissues tested, including heart, brain, placenta, lung, liver, skeletal muscle, kidney and pancreas. Expressed in J.CaM1.6, HuT 78 and HeLa cell lines (at protein level).

The protein resides in the cytoplasm. It is found in the cytosol. It localises to the membrane. Its subcellular location is the endosome membrane. The protein localises to the golgi apparatus. The protein resides in the trans-Golgi network membrane. May play a role as a negative regulatory factor in CD4-dependent T-cell activation. This chain is Maspardin (SPG21), found in Homo sapiens (Human).